A 983-amino-acid chain; its full sequence is Nitrate reductase [NADPH] (983 aa).

2 stretches are compositionally biased toward low complexity: residues Met-1–Thr-14 and Ser-26–Thr-48. The segment at Met-1–Leu-50 is disordered. Cys-184 is a binding site for Mo-molybdopterin. Residues Asp-585–Glu-662 form the Cytochrome b5 heme-binding domain. Positions 622 and 645 each coordinate heme. Residues Lys-688–Leu-815 form the FAD-binding FR-type domain. Residues Arg-746–Thr-749, Leu-763–Tyr-767, Phe-768, Phe-780, Lys-784–Thr-786, Ser-841, and Thr-844 contribute to the FAD site. NADP(+) is bound at residue Leu-952–Met-961.

This sequence belongs to the nitrate reductase family. As to quaternary structure, homodimer. FAD is required as a cofactor. Requires heme as cofactor. The cofactor is Mo-molybdopterin.

The catalysed reaction is nitrite + NADP(+) + H2O = nitrate + NADPH + H(+). It participates in nitrogen metabolism; nitrate reduction (assimilation). Functionally, nitrate reductase is a key enzyme involved in the first step of nitrate assimilation in plants, fungi and bacteria. This Mycosarcoma maydis (Corn smut fungus) protein is Nitrate reductase [NADPH] (NAR1).